A 268-amino-acid polypeptide reads, in one-letter code: Tryptophan synthase alpha chain (268 aa).

Active-site proton acceptor residues include E49 and D60.

The protein belongs to the TrpA family. In terms of assembly, tetramer of two alpha and two beta chains.

The catalysed reaction is (1S,2R)-1-C-(indol-3-yl)glycerol 3-phosphate + L-serine = D-glyceraldehyde 3-phosphate + L-tryptophan + H2O. It participates in amino-acid biosynthesis; L-tryptophan biosynthesis; L-tryptophan from chorismate: step 5/5. The alpha subunit is responsible for the aldol cleavage of indoleglycerol phosphate to indole and glyceraldehyde 3-phosphate. This chain is Tryptophan synthase alpha chain, found in Shigella sonnei (strain Ss046).